The sequence spans 152 residues: Cell division protein SepF (152 aa).

Residues 23–32 (EVAREPEPMQ) are compositionally biased toward basic and acidic residues. Positions 23 to 42 (EVAREPEPMQKKTKKEKPSK) are disordered.

Belongs to the SepF family. Homodimer. Interacts with FtsZ.

It localises to the cytoplasm. Cell division protein that is part of the divisome complex and is recruited early to the Z-ring. Probably stimulates Z-ring formation, perhaps through the cross-linking of FtsZ protofilaments. Its function overlaps with FtsA. The sequence is that of Cell division protein SepF from Listeria innocua serovar 6a (strain ATCC BAA-680 / CLIP 11262).